We begin with the raw amino-acid sequence, 468 residues long: Protein CA_C1420 (468 aa).

The interval 1-289 is unknown; the sequence is MSLNGFYLLP…LKELERIRKD (289 aa). The 173-residue stretch at 296–468 folds into the AMMECR1 domain; the sequence is QEKDPYVKLA…KFMVTRHKES (173 aa).

The sequence is that of Protein CA_C1420 from Clostridium acetobutylicum (strain ATCC 824 / DSM 792 / JCM 1419 / IAM 19013 / LMG 5710 / NBRC 13948 / NRRL B-527 / VKM B-1787 / 2291 / W).